The following is a 220-amino-acid chain: UPF0758 protein CKO_05095 (220 aa).

Residues A98–I220 enclose the MPN domain. The Zn(2+) site is built by H169, H171, and D182. The short motif at H169–D182 is the JAMM motif element.

The protein belongs to the UPF0758 family. YicR subfamily.

The protein is UPF0758 protein CKO_05095 of Citrobacter koseri (strain ATCC BAA-895 / CDC 4225-83 / SGSC4696).